Here is a 193-residue protein sequence, read N- to C-terminus: Oligoribonuclease (193 aa).

An Exonuclease domain is found at 14-177 (LIWIDLEMTG…SDIYDSIAEL (164 aa)). Tyrosine 135 is a catalytic residue.

This sequence belongs to the oligoribonuclease family.

The protein localises to the cytoplasm. Its function is as follows. 3'-to-5' exoribonuclease specific for small oligoribonucleotides. The protein is Oligoribonuclease of Xylella fastidiosa (strain Temecula1 / ATCC 700964).